The primary structure comprises 254 residues: L-erythrulose-1-phosphate isomerase (254 aa).

The Electrophile role is filled by His-97. Residue Glu-170 is the Proton acceptor of the active site. Substrate is bound by residues Gly-176 and Ser-213.

It belongs to the triosephosphate isomerase family. In terms of assembly, homodimer.

It is found in the cytoplasm. The catalysed reaction is L-erythrulose 1-phosphate = D-erythrulose 4-phosphate. It participates in carbohydrate metabolism; erythritol degradation. Its function is as follows. Catalyzes the isomerization of D-erythrulose-4P to L-erythrulose-1P. In Mesorhizobium japonicum (strain LMG 29417 / CECT 9101 / MAFF 303099) (Mesorhizobium loti (strain MAFF 303099)), this protein is L-erythrulose-1-phosphate isomerase.